A 158-amino-acid polypeptide reads, in one-letter code: NADH-quinone oxidoreductase subunit B (158 aa).

Cys37, Cys38, Cys102, and Cys132 together coordinate [4Fe-4S] cluster.

It belongs to the complex I 20 kDa subunit family. In terms of assembly, NDH-1 is composed of 14 different subunits. Subunits NuoB, C, D, E, F, and G constitute the peripheral sector of the complex. [4Fe-4S] cluster is required as a cofactor.

Its subcellular location is the cell inner membrane. The enzyme catalyses a quinone + NADH + 5 H(+)(in) = a quinol + NAD(+) + 4 H(+)(out). In terms of biological role, NDH-1 shuttles electrons from NADH, via FMN and iron-sulfur (Fe-S) centers, to quinones in the respiratory chain. Couples the redox reaction to proton translocation (for every two electrons transferred, four hydrogen ions are translocated across the cytoplasmic membrane), and thus conserves the redox energy in a proton gradient. The protein is NADH-quinone oxidoreductase subunit B of Bordetella parapertussis (strain 12822 / ATCC BAA-587 / NCTC 13253).